We begin with the raw amino-acid sequence, 144 residues long: Transcription antitermination protein NusB (144 aa).

Belongs to the NusB family.

In terms of biological role, involved in transcription antitermination. Required for transcription of ribosomal RNA (rRNA) genes. Binds specifically to the boxA antiterminator sequence of the ribosomal RNA (rrn) operons. The chain is Transcription antitermination protein NusB from Blochmanniella pennsylvanica (strain BPEN).